The following is a 341-amino-acid chain: Putative amino-acid ABC transporter-binding protein YhdW (341 aa).

The signal sequence occupies residues 1–19 (MKKMMIATLAAASVLLAVA).

This sequence belongs to the bacterial solute-binding protein 3 family.

Its subcellular location is the periplasm. Functionally, probably part of the binding-protein-dependent transport system YdhWXYZ for an amino acid. This Escherichia coli (strain K12) protein is Putative amino-acid ABC transporter-binding protein YhdW (yhdW).